We begin with the raw amino-acid sequence, 507 residues long: Fumarate hydratase, mitochondrial (507 aa).

The transit peptide at 1–41 directs the protein to the mitochondrion; the sequence is MNRAFCLLARSRRFPRVPSAGAVLSGEAATLPRCAPNVVRM. K58, K63, and K77 each carry N6-acetyllysine; alternate. 3 positions are modified to N6-succinyllysine; alternate: K58, K63, and K77. T82 is modified (phosphothreonine). The residue at position 91 (K91) is an N6-acetyllysine. 2 positions are modified to N6-acetyllysine; alternate: K112 and K119. An N6-succinyllysine; alternate mark is found at K112 and K119. Residues 142–144, 173–176, and 183–185 each bind substrate; these read SGT, HPND, and SSN. Position 210 is an N6-acetyllysine (K210). Position 220 is an N6-acetyllysine; alternate (K220). The residue at position 220 (K220) is an N6-succinyllysine; alternate. Substrate is bound at residue T231. The active-site Proton donor/acceptor is the H232. At T233 the chain carries Phosphothreonine. The residue at position 289 (K289) is an N6-acetyllysine; alternate. K289 is modified (N6-succinyllysine; alternate). The active site involves S362. Residues S363 and 368-370 contribute to the substrate site; that span reads KVN. S363 bears the Phosphoserine mark. K464 and K470 each carry N6-succinyllysine. K499 is modified (N6-acetyllysine).

The protein belongs to the class-II fumarase/aspartase family. Fumarase subfamily. In terms of assembly, homotetramer. Interacts with H2AZ1. In terms of processing, phosphorylation at Thr-233 by PRKDC in response to DNA damage promotes translocation to the nucleus and recruitment to DNA double-strand breaks (DSBs).

The protein localises to the mitochondrion. It is found in the cytoplasm. Its subcellular location is the cytosol. It localises to the nucleus. The protein resides in the chromosome. The enzyme catalyses (S)-malate = fumarate + H2O. The protein operates within carbohydrate metabolism; tricarboxylic acid cycle; (S)-malate from fumarate: step 1/1. Catalyzes the reversible stereospecific interconversion of fumarate to L-malate. Experiments in other species have demonstrated that specific isoforms of this protein act in defined pathways and favor one direction over the other. Functionally, catalyzes the hydration of fumarate to L-malate in the tricarboxylic acid (TCA) cycle to facilitate a transition step in the production of energy in the form of NADH. In terms of biological role, catalyzes the dehydration of L-malate to fumarate. Fumarate metabolism in the cytosol plays a role during urea cycle and arginine metabolism; fumarate being a by-product of the urea cycle and amino-acid catabolism. Also plays a role in DNA repair by promoting non-homologous end-joining (NHEJ). In response to DNA damage and phosphorylation by PRKDC, translocates to the nucleus and accumulates at DNA double-strand breaks (DSBs): acts by catalyzing formation of fumarate, an inhibitor of KDM2B histone demethylase activity, resulting in enhanced dimethylation of histone H3 'Lys-36' (H3K36me2). This is Fumarate hydratase, mitochondrial from Rattus norvegicus (Rat).